Reading from the N-terminus, the 231-residue chain is UPF0749 protein YlxW (231 aa).

The signal sequence occupies residues 1-34 (MRGKSAVLLSLIMLIAGFLISFSFQMTKENNKSA). Positions 44-94 (YALRDELLKQEKENKKFEKELYQKQNKVRQAENKLKKEKSEYYNVLEDTEK) form a coiled coil.

It belongs to the UPF0749 family.

Functionally, may be involved in cell division and sporulation. The chain is UPF0749 protein YlxW (ylxW) from Bacillus subtilis (strain 168).